The following is a 231-amino-acid chain: tRNA (guanine-N(7)-)-methyltransferase (231 aa).

4 residues coordinate S-adenosyl-L-methionine: Glu62, Glu87, Asp114, and Asp136. Asp136 is an active-site residue. Residues Lys140, Asp172, and 210–213 contribute to the substrate site; that span reads TRYE.

Belongs to the class I-like SAM-binding methyltransferase superfamily. TrmB family.

The enzyme catalyses guanosine(46) in tRNA + S-adenosyl-L-methionine = N(7)-methylguanosine(46) in tRNA + S-adenosyl-L-homocysteine. Its pathway is tRNA modification; N(7)-methylguanine-tRNA biosynthesis. Its function is as follows. Catalyzes the formation of N(7)-methylguanine at position 46 (m7G46) in tRNA. In Zymomonas mobilis subsp. mobilis (strain ATCC 31821 / ZM4 / CP4), this protein is tRNA (guanine-N(7)-)-methyltransferase.